A 184-amino-acid chain; its full sequence is Holliday junction branch migration complex subunit RuvA (184 aa).

The tract at residues 1-64 (MIVAVEGIIT…EDADLLYGFL (64 aa)) is domain I. The segment at 65-145 (DEKEKRMFEM…ANDGEQYKIE (81 aa)) is domain II. Residue Glu-145 is a region of interest, flexible linker. Positions 145–184 (ETISALENLGFKRDKINKILLNCKSTNTADLIKEALKKLA) are domain III.

The protein belongs to the RuvA family. As to quaternary structure, homotetramer. Forms an RuvA(8)-RuvB(12)-Holliday junction (HJ) complex. HJ DNA is sandwiched between 2 RuvA tetramers; dsDNA enters through RuvA and exits via RuvB. An RuvB hexamer assembles on each DNA strand where it exits the tetramer. Each RuvB hexamer is contacted by two RuvA subunits (via domain III) on 2 adjacent RuvB subunits; this complex drives branch migration. In the full resolvosome a probable DNA-RuvA(4)-RuvB(12)-RuvC(2) complex forms which resolves the HJ.

The protein localises to the cytoplasm. Its function is as follows. The RuvA-RuvB-RuvC complex processes Holliday junction (HJ) DNA during genetic recombination and DNA repair, while the RuvA-RuvB complex plays an important role in the rescue of blocked DNA replication forks via replication fork reversal (RFR). RuvA specifically binds to HJ cruciform DNA, conferring on it an open structure. The RuvB hexamer acts as an ATP-dependent pump, pulling dsDNA into and through the RuvAB complex. HJ branch migration allows RuvC to scan DNA until it finds its consensus sequence, where it cleaves and resolves the cruciform DNA. The polypeptide is Holliday junction branch migration complex subunit RuvA (Campylobacter hominis (strain ATCC BAA-381 / DSM 21671 / CCUG 45161 / LMG 19568 / NCTC 13146 / CH001A)).